Reading from the N-terminus, the 177-residue chain is Olfactory protein (177 aa).

An N-terminal signal peptide occupies residues 1-17; the sequence is MIRIIAIVVLFFLQCQA. Cys81 and Cys174 are oxidised to a cystine.

Belongs to the calycin superfamily. Lipocalin family. Synthesized in Bowman glands, which secrete the mucus that bathes the cilia of the olfactory neuroepithelium.

It is found in the secreted. The polypeptide is Olfactory protein (Lithobates pipiens (Northern leopard frog)).